The sequence spans 191 residues: Succinoglycan biosynthesis protein ExoI (191 aa).

The segment at 1-21 is disordered; it reads MTRIKSAVAAGGRRAPHSARL.

It functions in the pathway glycan metabolism; exopolysaccharide biosynthesis. This chain is Succinoglycan biosynthesis protein ExoI (exoI), found in Rhizobium meliloti (strain 1021) (Ensifer meliloti).